The following is a 605-amino-acid chain: Protein MLN51 homolog (605 aa).

Composition is skewed to acidic residues over residues 1–16 (MAPDGVEDSDYESDPD) and 30–40 (SDDDEDDEEAD). Disordered stretches follow at residues 1–88 (MAPD…DGDY), 101–132 (NNDKTIVAGNGTDDSAATDLVDGEEQKKKEPF), 151–275 (DAAS…GRPP), 350–380 (TAQTTSHGRGVPPHGQVLYQQSPNQGDKVSS), and 544–605 (YQAD…SFSK). Ser30 is modified (phosphoserine). Residues 41–57 (DHDKLRAAIQIHSDEHS) show a composition bias toward basic and acidic residues. Residues 75–87 (SYGDDDDEEEDGD) show a composition bias toward acidic residues. Positions 166–192 (QSRDERKWGHDKFEEMNTQKQQYDRRT) are enriched in basic and acidic residues. Polar residues-rich tracts occupy residues 214 to 228 (NNSKEFTGNGHQNQF), 247 to 265 (NGNQAPSVQTKQSQNSSVE), and 367 to 380 (LYQQSPNQGDKVSS). The segment covering 552–567 (PSSAGSSSQENSSNNP) has biased composition (low complexity). The segment covering 578–593 (VTNNGNSQRSNSNPNK) has biased composition (polar residues).

It belongs to the CASC3 family. In terms of assembly, weakly interacts with EIF4A3.

It localises to the nucleus. The protein localises to the cytoplasm. Functionally, core component of the splicing-dependent multiprotein exon junction complex (EJC) deposited at splice junctions on mRNAs. The EJC is a dynamic structure consisting of core proteins and several peripheral nuclear and cytoplasmic associated factors that join the complex only transiently either during EJC assembly or during subsequent mRNA metabolism. The EJC marks the position of the exon-exon junction in the mature mRNA for the gene expression machinery and the core components remain bound to spliced mRNAs throughout all stages of mRNA metabolism thereby influencing downstream processes including nuclear mRNA export, subcellular mRNA localization, translation efficiency and nonsense-mediated mRNA decay (NMD). Stimulates the ATPase and RNA-helicase activities of EIF4A3. In Arabidopsis thaliana (Mouse-ear cress), this protein is Protein MLN51 homolog.